The sequence spans 907 residues: Schlafen family member 13 (907 aa).

The n'-domain region stretch occupies residues 1-353 (MEIHPSLVVE…WVRMMVDIGP (353 aa)). Catalysis depends on residues glutamate 205 and glutamate 210. Zn(2+) contacts are provided by histidine 281, cysteine 283, and cysteine 318. 604–611 (GMPGSGKT) provides a ligand contact to ATP.

The protein belongs to the Schlafen family. Subgroup III subfamily. It depends on Mg(2+) as a cofactor.

Its subcellular location is the cytoplasm. Endoribonuclease that cleaves tRNAs and rRNAs. Cleaves tRNAs 11 nucleotides from the 3'-terminus at the acceptor stem. Does not act on tRNA(Sec). This is Schlafen family member 13 from Rattus norvegicus (Rat).